The primary structure comprises 638 residues: Bromodomain-containing factor 2 (638 aa).

The segment covering 1 to 10 has biased composition (basic and acidic residues); sequence MSRTNMDTRH. Residues 1–54 are disordered; the sequence is MSRTNMDTRHAHSALLAAPQSATANSRSSNSSSESSSNKNNINVGVGDDSGNVS. Positions 25–43 are enriched in low complexity; the sequence is NSRSSNSSSESSSNKNNIN. In terms of domain architecture, Bromo 1 spans 130 to 239; that stretch reads EAEELPPHQS…KYFEKKLSAM (110 aa). The interval 250-306 is disordered; that stretch reads KKTSRNRKKNEDMDSPLVIRRSVSTTNDNIGESGNREGVSGGRPKRTIHPPKSKDLF. Ser-264 is modified (phosphoserine). A compositionally biased stretch (polar residues) spans 271-281; sequence SVSTTNDNIGE. The Bromo 2 domain occupies 317–426; the sequence is KTLQKKFRTC…ELFNFHWLEN (110 aa). The segment at 435-460 is disordered; the sequence is TDSDLEEDNYSSSYSSDDEYDDEDIN. Residues 450 to 460 show a composition bias toward acidic residues; sequence SDDEYDDEDIN. Residues 468–537 are a coiled coil; sequence AIQYLEQKLK…INELSDLEMN (70 aa). An NET domain is found at 506-590; that stretch reads TLLRRKAMKH…EKKNNNNSKR (85 aa). The segment at 586 to 638 is disordered; that stretch reads NNSKRKLSGNYSTAPTNKKKKTLKFLEKDEIINNNNYSDSEEDSSDSSDSDSD. Acidic residues predominate over residues 624-638; it reads DSEEDSSDSSDSDSD.

This sequence belongs to the BET family. In terms of assembly, interacts with the TFIID subunit TAF7 and with histone H4. In terms of processing, phosphorylated by the casein kinase CK2 complex.

The protein localises to the cytoplasm. Its subcellular location is the nucleus. Functionally, transcription factor involved in the expression of a broad class of genes including snRNAs. Required for sporulation and DNA-damage repair. Prevents the spreading of SIR silencing at telomeres and protects histone H4, but not H3, from deacetylation. The protein is Bromodomain-containing factor 2 (BDF2) of Saccharomyces cerevisiae (strain ATCC 204508 / S288c) (Baker's yeast).